We begin with the raw amino-acid sequence, 129 residues long: Arsenate-mycothiol transferase ArsC2 (129 aa).

The protein belongs to the low molecular weight phosphotyrosine protein phosphatase family.

It is found in the cytoplasm. It catalyses the reaction mycothiol + arsenate = arseno-mycothiol + H2O. Functionally, involved in defense against toxic arsenate. Involved in the mycothiol/myoredoxin redox pathway which uses a mycothioltransferase mechanism; facilitates adduct formation between arsenate and mycothiol. This chain is Arsenate-mycothiol transferase ArsC2 (arsC2), found in Corynebacterium glutamicum (strain ATCC 13032 / K051).